Here is a 364-residue protein sequence, read N- to C-terminus: Probable dual-specificity RNA methyltransferase RlmN (364 aa).

Residue E106 is the Proton acceptor of the active site. A Radical SAM core domain is found at 112–350; sequence YPQRNTVCIS…SCTVRDTRGR (239 aa). Cysteines 119 and 356 form a disulfide. [4Fe-4S] cluster-binding residues include C126, C130, and C133. S-adenosyl-L-methionine contacts are provided by residues 177-178, S211, 234-236, and N313; these read GE and SLH. The active-site S-methylcysteine intermediate is the C356.

Belongs to the radical SAM superfamily. RlmN family. It depends on [4Fe-4S] cluster as a cofactor.

It localises to the cytoplasm. It catalyses the reaction adenosine(2503) in 23S rRNA + 2 reduced [2Fe-2S]-[ferredoxin] + 2 S-adenosyl-L-methionine = 2-methyladenosine(2503) in 23S rRNA + 5'-deoxyadenosine + L-methionine + 2 oxidized [2Fe-2S]-[ferredoxin] + S-adenosyl-L-homocysteine. The catalysed reaction is adenosine(37) in tRNA + 2 reduced [2Fe-2S]-[ferredoxin] + 2 S-adenosyl-L-methionine = 2-methyladenosine(37) in tRNA + 5'-deoxyadenosine + L-methionine + 2 oxidized [2Fe-2S]-[ferredoxin] + S-adenosyl-L-homocysteine. Functionally, specifically methylates position 2 of adenine 2503 in 23S rRNA and position 2 of adenine 37 in tRNAs. The chain is Probable dual-specificity RNA methyltransferase RlmN from Mycobacterium ulcerans (strain Agy99).